The following is a 285-amino-acid chain: Probable enoyl-CoA hydratase echA12 (285 aa).

The protein belongs to the enoyl-CoA hydratase/isomerase family.

The enzyme catalyses a (3S)-3-hydroxyacyl-CoA = a (2E)-enoyl-CoA + H2O. The catalysed reaction is a 4-saturated-(3S)-3-hydroxyacyl-CoA = a (3E)-enoyl-CoA + H2O. Could possibly oxidize fatty acids using specific components. This chain is Probable enoyl-CoA hydratase echA12 (echA12), found in Mycobacterium bovis (strain ATCC BAA-935 / AF2122/97).